We begin with the raw amino-acid sequence, 544 residues long: Chaperonin GroEL (544 aa).

ATP is bound by residues 30 to 33, Lys-51, 87 to 91, Gly-415, 479 to 481, and Asp-495; these read TLGP, DGTTT, and NAA.

It belongs to the chaperonin (HSP60) family. As to quaternary structure, forms a cylinder of 14 subunits composed of two heptameric rings stacked back-to-back. Interacts with the co-chaperonin GroES.

It is found in the cytoplasm. The enzyme catalyses ATP + H2O + a folded polypeptide = ADP + phosphate + an unfolded polypeptide.. Functionally, together with its co-chaperonin GroES, plays an essential role in assisting protein folding. The GroEL-GroES system forms a nano-cage that allows encapsulation of the non-native substrate proteins and provides a physical environment optimized to promote and accelerate protein folding. The protein is Chaperonin GroEL of Francisella tularensis subsp. holarctica (strain FTNF002-00 / FTA).